A 299-amino-acid chain; its full sequence is Protein translocase subunit SecF (299 aa).

6 helical membrane passes run 14 to 34 (VLIVSAVLILVGLIYTFFYHG), 142 to 162 (IFLVLGTFILILIYITLRFKL), 166 to 186 (IASILSIFHDIFFIVAFLGVF), 193 to 213 (YIIVAILTIIGYSLNDTIIIF), 245 to 265 (LTSVTTFVAVFSIYVFTEGSI), and 270 to 290 (LVFMVGVIVGTYSSVFIASPI).

The protein belongs to the SecD/SecF family. SecF subfamily. Forms a complex with SecD. Part of the essential Sec protein translocation apparatus which comprises SecA, SecYEG and auxiliary proteins SecDF. Other proteins may also be involved.

The protein resides in the cell inner membrane. Part of the Sec protein translocase complex. Interacts with the SecYEG preprotein conducting channel. SecDF uses the proton motive force (PMF) to complete protein translocation after the ATP-dependent function of SecA. This Borreliella burgdorferi (strain ATCC 35210 / DSM 4680 / CIP 102532 / B31) (Borrelia burgdorferi) protein is Protein translocase subunit SecF.